Reading from the N-terminus, the 405-residue chain is Syndecan-3 (405 aa).

A signal peptide spans 1–22; it reads MPAELRRLAVLLLLLSARAALA. Residues 23–347 are Extracellular-facing; that stretch reads QPWRNENYER…PQKNILERKE (325 aa). The interval 31 to 59 is disordered; it reads ERPVDLEGSGDDDPFGDDELDDIYSGSGS. The segment covering 38–52 has biased composition (acidic residues); sequence GSGDDDPFGDDELDD. Residues Ser39, Ser55, Ser57, Ser59, and Ser66 are each glycosylated (O-linked (Xyl...) (glycosaminoglycan) serine). 2 disordered regions span residues 134-159 and 191-301; these read TTTA…ATTT and TRAT…ELGN. A compositionally biased stretch (low complexity) spans 191-201; it reads TRATTLETPTT. Residues 202 to 237 are compositionally biased toward polar residues; the sequence is SIPETSVLTEVTTSRLVPSSTAKPRSLPKPSTSRTA. Ser280, Ser283, and Ser330 each carry an O-linked (Xyl...) (glycosaminoglycan) serine glycan. Residues 348-372 form a helical membrane-spanning segment; that stretch reads VLIAVIVGGVVGALFAAFLVMLLIY. Topologically, residues 373–405 are cytoplasmic; sequence RMKKKDEGSYTLEEPKQANVTYQKPDKQEEFYA.

The protein belongs to the syndecan proteoglycan family. Post-translationally, O-glycosylated within the Thr/Ser-rich region which could interact with lectin domains on other molecules. In terms of tissue distribution, proximal chondrogenic central core of embryonic limb buds where cartilage differentiation is being initiated.

The protein localises to the membrane. Cell surface proteoglycan that may bear both heparan sulfate and chondroitin sulfate. The multiple functional domains provide potential sites for mediating the adhesive cell-matrix interactions and cytoskeletal reorganization involved in limb chondrogenesis. Interaction with other matrix ligands as well as phosphorylation and shedding of the ectodomain might be involved in cell shape changes that occur during chondrogenesis. Furthermore, shedding of the ectodomain might break the adhesive interactions that promoted condensation, thus facilitating the deposition of cartilage matrix molecules. The protein is Syndecan-3 (SDC3) of Gallus gallus (Chicken).